A 119-amino-acid polypeptide reads, in one-letter code: Small ribosomal subunit protein uS13m (119 aa).

Belongs to the universal ribosomal protein uS13 family. In terms of assembly, part of the small ribosomal subunit.

The protein resides in the mitochondrion. Functionally, located at the top of the head of the small subunit, it contacts several helices of the small subunit rRNA. The polypeptide is Small ribosomal subunit protein uS13m (RPS13) (Acanthamoeba castellanii (Amoeba)).